A 30-amino-acid polypeptide reads, in one-letter code: Acidic phospholipase A2 homolog cannitoxin gamma chain (30 aa).

In terms of assembly, heterotrimer of alpha, beta, and gamma chains; non-covalently linked. In terms of processing, glycosylated. As to expression, expressed by the venom gland.

Its subcellular location is the secreted. Its function is as follows. Heterotrimer: Snake venom phospholipase A2 (PLA2) heterotrimer that acts as a potent presynaptic neurotoxin by blocking synaptic transmission and synaptic vesicle recycling. Enzymatic activity is essential for the neurotoxic effects. May act by binding in a calcium-dependent fashion to neurotonal pentraxin-1 (NPTX1) and neurotonal pentraxin-2 (NPTX2), but not to neuronal pentraxin receptor (NPTXR). Also binds to taipoxin-associated calcium binding protein 49 (RCN2), a protein localized in the lumen of endoplasmic reticulum. In terms of biological role, monomer (gamma chain): Snake venom phospholipase A2 homolog that is neither toxic nor enzymatically active. Does not bind calcium. This Oxyuranus scutellatus canni (Papuan taipan) protein is Acidic phospholipase A2 homolog cannitoxin gamma chain.